The sequence spans 1770 residues: Transposon Ty2-OR1 Gag-Pol polyprotein (1770 aa).

Polar residues-rich tracts occupy residues 1-39 (MESQ…SASN) and 49-60 (KVNSQQETTPGT). 2 disordered regions span residues 1 to 88 (MESQ…YQQH) and 359 to 449 (QHSE…SNDE). Residues 295-397 (ENNINVSDRL…SSKPRAAKAH (103 aa)) form an RNA-binding region. Over residues 369 to 381 (TSPNTTNTKVTTR) the composition is skewed to low complexity. Composition is skewed to polar residues over residues 399-408 (IATSSKFSRV) and 415-435 (ESTV…GQQQ). The active-site For protease activity; shared with dimeric partner is Asp-457. Positions 579 to 636 (NVNKSKSVNKYPYPLIHRMLGHANFRSIQKSLKKNAVTYLKESDIEWSNASTYQCPDC) are integrase-type zinc finger-like. An Integrase catalytic domain is found at 656-831 (ESYEPFQYLH…AGLDITTILP (176 aa)). Positions 667 and 732 each coordinate Mg(2+). Polar residues-rich tracts occupy residues 916–929 (FIEQ…YDQN), 1009–1024 (ESDT…FTAR), and 1065–1082 (QRNS…STPS). Disordered stretches follow at residues 916 to 935 (FIEQ…SDHD), 1005 to 1038 (GGTI…MIDL), and 1057 to 1205 (GGTE…TEIE). The Bipartite nuclear localization signal motif lies at 1193 to 1227 (KKRSLEDNETEIEVSRDTWNNKNMRSLEPPRSKKR). Positions 1353–1491 (NDYYITQLDI…DILGLEIKYQ (139 aa)) constitute a Reverse transcriptase Ty1/copia-type domain. The Mg(2+) site is built by Asp-1361, Asp-1442, Asp-1443, Asp-1625, Glu-1667, and Asp-1700. Residues 1625–1767 (DASYGNQPYY…IKTFKLLTNK (143 aa)) enclose the RNase H Ty1/copia-type domain.

As to quaternary structure, the capsid protein forms a homotrimer, from which the VLPs are assembled. The protease is a homodimer, whose active site consists of two apposed aspartic acid residues. In terms of processing, initially, virus-like particles (VLPs) are composed of the structural unprocessed proteins Gag and Gag-Pol, and also contain the host initiator methionine tRNA (tRNA(i)-Met) which serves as a primer for minus-strand DNA synthesis, and a dimer of genomic Ty RNA. Processing of the polyproteins occurs within the particle and proceeds by an ordered pathway, called maturation. First, the protease (PR) is released by autocatalytic cleavage of the Gag-Pol polyprotein, and this cleavage is a prerequisite for subsequent processing at the remaining sites to release the mature structural and catalytic proteins. Maturation takes place prior to the RT reaction and is required to produce transposition-competent VLPs.

Its subcellular location is the cytoplasm. It is found in the nucleus. The catalysed reaction is DNA(n) + a 2'-deoxyribonucleoside 5'-triphosphate = DNA(n+1) + diphosphate. It catalyses the reaction Endonucleolytic cleavage to 5'-phosphomonoester.. Functionally, capsid protein (CA) is the structural component of the virus-like particle (VLP), forming the shell that encapsulates the retrotransposons dimeric RNA genome. The particles are assembled from trimer-clustered units and there are holes in the capsid shells that allow for the diffusion of macromolecules. CA also has nucleocapsid-like chaperone activity, promoting primer tRNA(i)-Met annealing to the multipartite primer-binding site (PBS), dimerization of Ty2 RNA and initiation of reverse transcription. Its function is as follows. The aspartyl protease (PR) mediates the proteolytic cleavages of the Gag and Gag-Pol polyproteins after assembly of the VLP. In terms of biological role, reverse transcriptase/ribonuclease H (RT) is a multifunctional enzyme that catalyzes the conversion of the retro-elements RNA genome into dsDNA within the VLP. The enzyme displays a DNA polymerase activity that can copy either DNA or RNA templates, and a ribonuclease H (RNase H) activity that cleaves the RNA strand of RNA-DNA heteroduplexes during plus-strand synthesis and hydrolyzes RNA primers. The conversion leads to a linear dsDNA copy of the retrotransposon that includes long terminal repeats (LTRs) at both ends. Integrase (IN) targets the VLP to the nucleus, where a subparticle preintegration complex (PIC) containing at least integrase and the newly synthesized dsDNA copy of the retrotransposon must transit the nuclear membrane. Once in the nucleus, integrase performs the integration of the dsDNA into the host genome. This chain is Transposon Ty2-OR1 Gag-Pol polyprotein (TY2B-OR1), found in Saccharomyces cerevisiae (strain ATCC 204508 / S288c) (Baker's yeast).